A 523-amino-acid polypeptide reads, in one-letter code: GMP synthase [glutamine-hydrolyzing] (523 aa).

In terms of domain architecture, Glutamine amidotransferase type-1 spans 8-205 (KILILDFGSQ…VVGICGCECK (198 aa)). The active-site Nucleophile is Cys-85. Residues His-179 and Glu-181 contribute to the active site. One can recognise a GMPS ATP-PPase domain in the interval 206 to 398 (WTAENIIERR…LGLPAEMLNR (193 aa)). Residue 233–239 (SGGVDSS) coordinates ATP.

Homodimer.

The catalysed reaction is XMP + L-glutamine + ATP + H2O = GMP + L-glutamate + AMP + diphosphate + 2 H(+). It functions in the pathway purine metabolism; GMP biosynthesis; GMP from XMP (L-Gln route): step 1/1. In terms of biological role, catalyzes the synthesis of GMP from XMP. The protein is GMP synthase [glutamine-hydrolyzing] of Actinobacillus pleuropneumoniae serotype 5b (strain L20).